A 355-amino-acid polypeptide reads, in one-letter code: Putative L-lysine 2,3-aminomutase (355 aa).

The 216-residue stretch at 93–308 (VHQYANRVLM…KERLSGLSLP (216 aa)) folds into the Radical SAM core domain. [4Fe-4S] cluster contacts are provided by Cys108, Cys112, and Cys115. An N6-(pyridoxal phosphate)lysine modification is found at Lys320.

The protein belongs to the radical SAM superfamily. KamA family. It depends on [4Fe-4S] cluster as a cofactor. Pyridoxal 5'-phosphate serves as cofactor.

In Treponema pallidum (strain Nichols), this protein is Putative L-lysine 2,3-aminomutase.